The chain runs to 251 residues: Methylthioribulose-1-phosphate dehydratase (251 aa).

The interval 1-26 (MTSVCDATNEDKENGSESTESQDKEH) is disordered. Over residues 9 to 26 (NEDKENGSESTESQDKEH) the composition is skewed to basic and acidic residues. Cys100 is a substrate binding site. Positions 118 and 120 each coordinate Zn(2+). The active-site Proton donor/acceptor is the Glu142. His198 is a Zn(2+) binding site. The disordered stretch occupies residues 232-251 (MDPSAPPIEENHYYDVQQSQ).

It belongs to the aldolase class II family. MtnB subfamily. It depends on Zn(2+) as a cofactor.

It localises to the cytoplasm. The catalysed reaction is 5-(methylsulfanyl)-D-ribulose 1-phosphate = 5-methylsulfanyl-2,3-dioxopentyl phosphate + H2O. Its pathway is amino-acid biosynthesis; L-methionine biosynthesis via salvage pathway; L-methionine from S-methyl-5-thio-alpha-D-ribose 1-phosphate: step 2/6. Its function is as follows. Catalyzes the dehydration of methylthioribulose-1-phosphate (MTRu-1-P) into 2,3-diketo-5-methylthiopentyl-1-phosphate (DK-MTP-1-P). Functions in the methionine salvage pathway. May play a role in apoptosis. This is Methylthioribulose-1-phosphate dehydratase from Salmo salar (Atlantic salmon).